The sequence spans 159 residues: Ribosomal RNA large subunit methyltransferase H (159 aa).

S-adenosyl-L-methionine contacts are provided by residues Leu76, Gly108, and 127–132 (FSKMTF).

Belongs to the RNA methyltransferase RlmH family. Homodimer.

The protein localises to the cytoplasm. The enzyme catalyses pseudouridine(1915) in 23S rRNA + S-adenosyl-L-methionine = N(3)-methylpseudouridine(1915) in 23S rRNA + S-adenosyl-L-homocysteine + H(+). Its function is as follows. Specifically methylates the pseudouridine at position 1915 (m3Psi1915) in 23S rRNA. This chain is Ribosomal RNA large subunit methyltransferase H, found in Clostridium botulinum (strain Kyoto / Type A2).